The primary structure comprises 343 residues: CRISPR-associated endonuclease Cas1 1 (343 aa).

Mn(2+) contacts are provided by Glu166, His234, and Glu249.

Belongs to the CRISPR-associated endonuclease Cas1 family. As to quaternary structure, homodimer, forms a heterotetramer with a Cas2 homodimer. Mg(2+) is required as a cofactor. It depends on Mn(2+) as a cofactor.

Its function is as follows. CRISPR (clustered regularly interspaced short palindromic repeat), is an adaptive immune system that provides protection against mobile genetic elements (viruses, transposable elements and conjugative plasmids). CRISPR clusters contain spacers, sequences complementary to antecedent mobile elements, and target invading nucleic acids. CRISPR clusters are transcribed and processed into CRISPR RNA (crRNA). Acts as a dsDNA endonuclease. Involved in the integration of spacer DNA into the CRISPR cassette. This Chlorobaculum tepidum (strain ATCC 49652 / DSM 12025 / NBRC 103806 / TLS) (Chlorobium tepidum) protein is CRISPR-associated endonuclease Cas1 1.